A 649-amino-acid polypeptide reads, in one-letter code: Transcription factor E2-alpha (649 aa).

Disordered regions lie at residues 37 to 107, 132 to 207, 296 to 325, and 339 to 376; these read RPAS…SERN, GLSS…AKTP, TYSG…SSSG, and DHSS…ALSP. Positions 57-71 are enriched in polar residues; that stretch reads SESWGNSEQNSSSFD. Residues 132–148 are compositionally biased toward low complexity; that stretch reads GLSSPGPLSPSGVKSSS. Phosphoserine is present on residues serine 135 and serine 140. A Nuclear localization signal motif is present at residues 171–177; that stretch reads PKKVRKV. The segment covering 339-352 has biased composition (low complexity); it reads DHSSNNFSPSPSTP. Threonine 351 is modified (phosphothreonine). Serine 355 bears the Phosphoserine mark. Position 367 is an omega-N-methylarginine (arginine 367). Position 375 is a phosphoserine (serine 375). Positions 385–420 are leucine-zipper; sequence LSKMEDRLDEAIHVLRSHAVGTASELHGLLPGHSTL. The disordered stretch occupies residues 435–547; it reads AGLVSGSHPE…KAEREKERRV (113 aa). The span at 459-477 shows a compositional bias: low complexity; the sequence is SLPSQPSSLPDLSQRPPDS. Lysine 494 participates in a covalent cross-link: Glycyl lysine isopeptide (Lys-Gly) (interchain with G-Cter in SUMO2). Serine 524 is subject to Phosphoserine. Aspartate 526 carries the post-translational modification Phosphothreonine. The span at 537 to 547 shows a compositional bias: basic and acidic residues; it reads QKAEREKERRV. Residues 544 to 597 enclose the bHLH domain; that stretch reads ERRVANNARERLRVRDINEAFKELGRMCQLHLSTEKPQTKLLILHQAVAVILSL. A Glycyl lysine isopeptide (Lys-Gly) (interchain with G-Cter in SUMO2) cross-link involves residue lysine 620.

Homodimer. Heterodimer; efficient DNA binding requires dimerization with another bHLH protein. Forms a heterodimer with TWIST1 and TWIST2. Forms a heterodimer with NEUROD1; the heterodimer is inhibited in presence of ID2, but not NR0B2, to E-box element. Forms a heterodimer with TCF15; the heterodimer binds E-box element. Forms a heterodimer with MYOG; heterodimerization enhances MYOG DNA-binding and transcriptional activities. Forms a heterodimer with ATOH8; repress transcription of TCF3 and TCF3-NEUROG3 dimer-induced transactivation of E box-dependent promoters. Component of a nuclear TAL-1 complex composed at least of CBFA2T3, LDB1, TAL1 and TCF3. Interacts with NEUROD2. Interacts with EP300. Interacts with PTF1A, TGFB1I1. Interacts with UBE2I. Interacts with BHLHA9. Interacts with ASB2; the interaction is mediated by SKP2 and targets TCF3 for Notch-induced proteasomal degradation. Interacts with transcription factor ASCL5/AmeloD. As to quaternary structure, interacts with RALGAPA1. Interacts with FIGLA. In terms of assembly, forms a heterodimer with ATOH7; required for ATOH7 DNA-binding. Phosphorylated following NGF stimulation. Post-translationally, undergoes Notch-induced ubiquitination and subsequent proteasomal degradation which is mediated by ASB1 or ASB2, the substrate-recognition components of probable ECS E3 ubiquitin-protein ligase complexes.

The protein resides in the nucleus. Functionally, transcriptional regulator involved in the initiation of neuronal differentiation and mesenchymal to epithelial transition. Heterodimers between TCF3 and tissue-specific basic helix-loop-helix (bHLH) proteins play major roles in determining tissue-specific cell fate during embryogenesis, like muscle or early B-cell differentiation. Together with TCF15, required for the mesenchymal to epithelial transition. Dimers bind DNA on E-box motifs: 5'-CANNTG-3'. Binds to the kappa-E2 site in the kappa immunoglobulin gene enhancer. Binds to the consensus sequence CAC/GCTGT/C present, in the chymotrypsin, insulin, AP-4, and several other gene enhancer motifs. Facilitates ATOH7 binding to DNA at the consensus sequence 5'-CAGGTG-3', and positively regulates transcriptional activity. The polypeptide is Transcription factor E2-alpha (Tcf3) (Rattus norvegicus (Rat)).